A 113-amino-acid polypeptide reads, in one-letter code: Iron-sulfur cluster insertion protein ErpA (113 aa).

Iron-sulfur cluster is bound by residues C41, C105, and C107.

It belongs to the HesB/IscA family. Homodimer. Iron-sulfur cluster is required as a cofactor.

Its function is as follows. Required for insertion of 4Fe-4S clusters for at least IspG. This Photobacterium profundum (strain SS9) protein is Iron-sulfur cluster insertion protein ErpA.